A 227-amino-acid chain; its full sequence is Cytidylate kinase (227 aa).

10-18 contacts ATP; it reads GPASSGKST.

The protein belongs to the cytidylate kinase family. Type 1 subfamily.

The protein resides in the cytoplasm. It catalyses the reaction CMP + ATP = CDP + ADP. The enzyme catalyses dCMP + ATP = dCDP + ADP. The protein is Cytidylate kinase of Streptococcus agalactiae serotype Ia (strain ATCC 27591 / A909 / CDC SS700).